Reading from the N-terminus, the 158-residue chain is 2-C-methyl-D-erythritol 2,4-cyclodiphosphate synthase (158 aa).

A divalent metal cation contacts are provided by D9 and H11. 4-CDP-2-C-methyl-D-erythritol 2-phosphate-binding positions include 9-11 and 35-36; these read DVH and HS. An a divalent metal cation-binding site is contributed by H43. Residues 57–59, 62–66, 133–136, F140, and R143 contribute to the 4-CDP-2-C-methyl-D-erythritol 2-phosphate site; these read DIG, FPDTD, and TTTE.

The protein belongs to the IspF family. Homotrimer. A divalent metal cation serves as cofactor.

The catalysed reaction is 4-CDP-2-C-methyl-D-erythritol 2-phosphate = 2-C-methyl-D-erythritol 2,4-cyclic diphosphate + CMP. Its pathway is isoprenoid biosynthesis; isopentenyl diphosphate biosynthesis via DXP pathway; isopentenyl diphosphate from 1-deoxy-D-xylulose 5-phosphate: step 4/6. Its function is as follows. Involved in the biosynthesis of isopentenyl diphosphate (IPP) and dimethylallyl diphosphate (DMAPP), two major building blocks of isoprenoid compounds. Catalyzes the conversion of 4-diphosphocytidyl-2-C-methyl-D-erythritol 2-phosphate (CDP-ME2P) to 2-C-methyl-D-erythritol 2,4-cyclodiphosphate (ME-CPP) with a corresponding release of cytidine 5-monophosphate (CMP). This is 2-C-methyl-D-erythritol 2,4-cyclodiphosphate synthase from Actinobacillus pleuropneumoniae serotype 5b (strain L20).